The chain runs to 445 residues: Tubulin beta chain (445 aa).

GTP-binding residues include Q11, E69, S138, G142, T143, G144, N204, and N226. E69 contributes to the Mg(2+) binding site.

Belongs to the tubulin family. In terms of assembly, dimer of alpha and beta chains. A typical microtubule is a hollow water-filled tube with an outer diameter of 25 nm and an inner diameter of 15 nM. Alpha-beta heterodimers associate head-to-tail to form protofilaments running lengthwise along the microtubule wall with the beta-tubulin subunit facing the microtubule plus end conferring a structural polarity. Microtubules usually have 13 protofilaments but different protofilament numbers can be found in some organisms and specialized cells. It depends on Mg(2+) as a cofactor.

Its subcellular location is the cytoplasm. The protein resides in the cytoskeleton. Tubulin is the major constituent of microtubules, a cylinder consisting of laterally associated linear protofilaments composed of alpha- and beta-tubulin heterodimers. Microtubules grow by the addition of GTP-tubulin dimers to the microtubule end, where a stabilizing cap forms. Below the cap, tubulin dimers are in GDP-bound state, owing to GTPase activity of alpha-tubulin. In Coprinopsis cinerea (strain Okayama-7 / 130 / ATCC MYA-4618 / FGSC 9003) (Inky cap fungus), this protein is Tubulin beta chain.